The sequence spans 634 residues: Sodium-dependent multivitamin transporter (634 aa).

12 helical membrane-spanning segments follow: residues 23–43, 65–85, 100–120, 142–162, 175–195, 207–227, 255–275, 295–315, 350–370, 403–423, 427–447, and 455–475; these read FSVV…VIGL, MGCL…VAIL, FLGC…IPVF, ICGT…ALYA, LWLS…LGGL, LIMF…VGGL, FWTL…VNQA, AVFP…LVMF, LPGL…SSAF, FAYG…GSVL, LSIF…GMFF, and AIVG…GSIV. N-linked (GlcNAc...) asparagine glycosylation is found at Asn-488 and Asn-497. A helical membrane pass occupies residues 526–546; the sequence is LWYSAHNSTTVIAVGLIVSLL.

This sequence belongs to the sodium:solute symporter (SSF) (TC 2.A.21) family. In terms of assembly, interacts with PDZD11. As to expression, expressed in the jejunum (at protein level). Expressed in lung, skeletal muscle, heart, brain, kidney, intestine, liver, and placenta.

It localises to the cell membrane. Its subcellular location is the apical cell membrane. The catalysed reaction is biotin(out) + 2 Na(+)(out) = biotin(in) + 2 Na(+)(in). The enzyme catalyses (R)-pantothenate(out) + 2 Na(+)(out) = (R)-pantothenate(in) + 2 Na(+)(in). It carries out the reaction (R)-lipoate(out) + 2 Na(+)(out) = (R)-lipoate(in) + 2 Na(+)(in). It catalyses the reaction iodide(out) + 2 Na(+)(out) = iodide(in) + 2 Na(+)(in). Its function is as follows. Sodium-dependent multivitamin transporter that mediates the electrogenic transport of pantothenate, biotin, lipoate and iodide. Functions as a Na(+)-coupled substrate symporter where the stoichiometry of Na(+):substrate is 2:1, creating an electrochemical Na(+) gradient used as driving force for substrate uptake. Required for biotin and pantothenate uptake in the intestine across the brush border membrane. Plays a role in the maintenance of intestinal mucosa integrity, by providing the gut mucosa with biotin. Contributes to the luminal uptake of biotin and pantothenate into the brain across the blood-brain barrier. The protein is Sodium-dependent multivitamin transporter of Rattus norvegicus (Rat).